An 880-amino-acid polypeptide reads, in one-letter code: DNA-directed RNA polymerase subunit beta C-terminal section (880 aa).

It belongs to the RNA polymerase beta chain family. As to quaternary structure, in plastids the minimal PEP RNA polymerase catalytic core is composed of four subunits: alpha, beta, beta', and beta''. When a (nuclear-encoded) sigma factor is associated with the core the holoenzyme is formed, which can initiate transcription.

Its subcellular location is the plastid. It is found in the chloroplast. It catalyses the reaction RNA(n) + a ribonucleoside 5'-triphosphate = RNA(n+1) + diphosphate. In terms of biological role, DNA-dependent RNA polymerase catalyzes the transcription of DNA into RNA using the four ribonucleoside triphosphates as substrates. This Pleurastrum terricola (Filamentous green alga) protein is DNA-directed RNA polymerase subunit beta C-terminal section (rpoB2).